The following is a 418-amino-acid chain: Sterigmatocystin 8-O-methyltransferase (418 aa).

Positions 1-41 (MALPSKAALVGLANTLSEQVKRYLATAGETKSPEDHKLCIE) are excised as a propeptide. 170 to 176 (MRSGASF) contacts substrate. The substrate binding stretch occupies residues 206–225 (LFDYYSTVDEVRGRRFDLGM). Residues 254 to 255 (GG), aspartate 277, 297 to 298 (DI), and arginine 313 each bind S-adenosyl-L-methionine. Histidine 317 serves as the catalytic Proton acceptor.

The protein belongs to the class I-like SAM-binding methyltransferase superfamily. Cation-independent O-methyltransferase family. COMT subfamily.

It localises to the cytoplasm. It is found in the vacuole. It catalyses the reaction sterigmatocystin + S-adenosyl-L-methionine = 8-O-methylsterigmatocystin + S-adenosyl-L-homocysteine + H(+). The enzyme catalyses dihydrosterigmatocystin + S-adenosyl-L-methionine = 8-O-methyldihydrosterigmatocystin + S-adenosyl-L-homocysteine + H(+). Its pathway is mycotoxin biosynthesis; aflatoxin biosynthesis. Its function is as follows. Sterigmatocystin 8-O-methyltransferase; part of the gene cluster that mediates the biosynthesis of aflatoxins, a group of polyketide-derived furanocoumarins, and part of the most toxic and carcinogenic compounds among the known mycotoxins. The four major aflatoxins produced by A.parasiticus are aflatoxin B1 (AFB1), aflatoxin B2 (AFB2), aflatoxin G1 (AFG1) and aflatoxin G2 (AFG2). Within the aflatoxin pathway, the O-methyltransferase aflP uses both sterigmatocystin (ST) and dihydrosterigmatocystin (DHST) as substrates to yield O-methylsterigmatocystin (OMST) and dihydro-O-methylsterigmatocystin (DHOMST), respectively. The biosynthesis of aflatoxins begins with the norsolorinic acid synthase aflC that combines a hexanoyl starter unit produced by the fatty acid synthase aflA/aflB and 7 malonyl-CoA extender units to synthesize the precursor NOR. The second step is the conversion of NOR to averantin and requires the norsolorinic acid ketoreductase aflD, which catalyzes the dehydration of norsolorinic acid to form (1'S)-averantin. The norsolorinic acid reductases aflE and aflF may also play a role in the conversion of NOR to AVN. The cytochrome P450 monooxygenase aflG then catalyzes the hydroxylation of AVN to 5'hydroxyaverantin (HAVN). The next step is performed by the 5'-hydroxyaverantin dehydrogenase aflH that transforms HAVN to 5'-oxoaverantin (OAVN) which is further converted to averufin (AVF) by aflK that plays a dual role in the pathway, as a 5'-oxoaverantin cyclase that mediates conversion of 5'-oxoaverantin, as well as a versicolorin B synthase in a later step in the pathway. The averufin oxidase aflI catalyzes the conversion of AVF to versiconal hemiacetal acetate (VHA). VHA is then the substrate for the versiconal hemiacetal acetate esterase aflJ to yield versiconal (VAL). Versicolorin B synthase aflK then converts VAL to versicolorin B (VERB) by closing the bisfuran ring of aflatoxin which is required for DNA-binding, thus giving to aflatoxin its activity as a mutagen. Then, the activity of the versicolorin B desaturase aflL leads to versicolorin A (VERA). A branch point starts from VERB since it can also be converted to dihydrodemethylsterigmatocystin (DMDHST), probably also by aflL, VERA being a precursor for aflatoxins B1 and G1, and DMDHST for aflatoxins B2 and G2. Next, the versicolorin reductase aflM and the cytochrome P450 monooxygenase aflN are involved in conversion of VERA to demethylsterigmatocystin (DMST). AflX and aflY seem also involved in this step, through probable aflX-mediated epoxide ring-opening step following versicolorin A oxidation and aflY-mediated Baeyer-Villiger oxidation required for the formation of the xanthone ring. The methyltransferase aflO then leads to the modification of DMST to sterigmatocystin (ST), and of DMDHST to dihydrosterigmatocystin (DHST). Both ST and DHST are then substrates of the O-methyltransferase aflP to yield O-methylsterigmatocystin (OMST) and dihydro-O-methylsterigmatocystin (DHOMST), respectively. Finally OMST is converted to aflatoxins B1 and G1, and DHOMST to aflatoxins B2 and G2, via the action of several enzymes including O-methylsterigmatocystin oxidoreductase aflQ, the cytochrome P450 monooxygenase aflU, but also the NADH-dependent flavin oxidoreductase nadA which is specifically required for the synthesis of AFG1. The sequence is that of Sterigmatocystin 8-O-methyltransferase from Aspergillus parasiticus (strain ATCC 56775 / NRRL 5862 / SRRC 143 / SU-1).